Here is a 188-residue protein sequence, read N- to C-terminus: Putative pre-16S rRNA nuclease (188 aa).

Positions 144 to 188 (HAPGRVVAGPKGRRKARHRGQGGTGTEQQADAGGRARPHATEGKG) are disordered. A compositionally biased stretch (basic residues) spans 154–163 (KGRRKARHRG).

The protein belongs to the YqgF nuclease family.

It is found in the cytoplasm. Its function is as follows. Could be a nuclease involved in processing of the 5'-end of pre-16S rRNA. The protein is Putative pre-16S rRNA nuclease of Kineococcus radiotolerans (strain ATCC BAA-149 / DSM 14245 / SRS30216).